Reading from the N-terminus, the 221-residue chain is Thiamine-phosphate synthase (221 aa).

4-amino-2-methyl-5-(diphosphooxymethyl)pyrimidine is bound by residues 47 to 51 (QYREK) and Asn79. Mg(2+)-binding residues include Asp80 and Asp99. Thr118 provides a ligand contact to 4-amino-2-methyl-5-(diphosphooxymethyl)pyrimidine. 144–146 (SFT) is a 2-[(2R,5Z)-2-carboxy-4-methylthiazol-5(2H)-ylidene]ethyl phosphate binding site. Lys147 contributes to the 4-amino-2-methyl-5-(diphosphooxymethyl)pyrimidine binding site. 2-[(2R,5Z)-2-carboxy-4-methylthiazol-5(2H)-ylidene]ethyl phosphate is bound by residues Gly175 and 195–196 (VT).

This sequence belongs to the thiamine-phosphate synthase family. The cofactor is Mg(2+).

It catalyses the reaction 2-[(2R,5Z)-2-carboxy-4-methylthiazol-5(2H)-ylidene]ethyl phosphate + 4-amino-2-methyl-5-(diphosphooxymethyl)pyrimidine + 2 H(+) = thiamine phosphate + CO2 + diphosphate. It carries out the reaction 2-(2-carboxy-4-methylthiazol-5-yl)ethyl phosphate + 4-amino-2-methyl-5-(diphosphooxymethyl)pyrimidine + 2 H(+) = thiamine phosphate + CO2 + diphosphate. The enzyme catalyses 4-methyl-5-(2-phosphooxyethyl)-thiazole + 4-amino-2-methyl-5-(diphosphooxymethyl)pyrimidine + H(+) = thiamine phosphate + diphosphate. The protein operates within cofactor biosynthesis; thiamine diphosphate biosynthesis; thiamine phosphate from 4-amino-2-methyl-5-diphosphomethylpyrimidine and 4-methyl-5-(2-phosphoethyl)-thiazole: step 1/1. Condenses 4-methyl-5-(beta-hydroxyethyl)thiazole monophosphate (THZ-P) and 2-methyl-4-amino-5-hydroxymethyl pyrimidine pyrophosphate (HMP-PP) to form thiamine monophosphate (TMP). This Caldicellulosiruptor saccharolyticus (strain ATCC 43494 / DSM 8903 / Tp8T 6331) protein is Thiamine-phosphate synthase.